A 299-amino-acid chain; its full sequence is MSESNRLRIAIQKSGRLSKESQKLLKSCGIKFNVNEQRLIAHSDNMPIDLLRVRDDDIPGLVMDGVVDLGIIGENVLEEEQIERQTLDKPSECIKLRQLDFGACRLSLAVPTEFRYQDASSLEGLRIATSYPNLLRRYMQEKGISYRDCMLKGSVEVAPRAGLADGICDLVSTGATLEANGLYETEVIYRSMACIIQSTQEQSEAKQALIDKILSRVNGVVRAKESKYILLHAPTETLDQIVALLPGAENPTVLPLNDDTNRVAIHAVSSEDLFWDTMEALTQLGASSILVMPIEKMMG.

Belongs to the ATP phosphoribosyltransferase family. Long subfamily. Mg(2+) serves as cofactor.

The protein localises to the cytoplasm. It catalyses the reaction 1-(5-phospho-beta-D-ribosyl)-ATP + diphosphate = 5-phospho-alpha-D-ribose 1-diphosphate + ATP. It functions in the pathway amino-acid biosynthesis; L-histidine biosynthesis; L-histidine from 5-phospho-alpha-D-ribose 1-diphosphate: step 1/9. Feedback inhibited by histidine. Functionally, catalyzes the condensation of ATP and 5-phosphoribose 1-diphosphate to form N'-(5'-phosphoribosyl)-ATP (PR-ATP). Has a crucial role in the pathway because the rate of histidine biosynthesis seems to be controlled primarily by regulation of HisG enzymatic activity. This is ATP phosphoribosyltransferase from Shewanella loihica (strain ATCC BAA-1088 / PV-4).